Reading from the N-terminus, the 186-residue chain is ATP synthase subunit delta (186 aa).

The protein belongs to the ATPase delta chain family. F-type ATPases have 2 components, F(1) - the catalytic core - and F(0) - the membrane proton channel. F(1) has five subunits: alpha(3), beta(3), gamma(1), delta(1), epsilon(1). F(0) has three main subunits: a(1), b(2) and c(10-14). The alpha and beta chains form an alternating ring which encloses part of the gamma chain. F(1) is attached to F(0) by a central stalk formed by the gamma and epsilon chains, while a peripheral stalk is formed by the delta and b chains.

The protein resides in the cell inner membrane. F(1)F(0) ATP synthase produces ATP from ADP in the presence of a proton or sodium gradient. F-type ATPases consist of two structural domains, F(1) containing the extramembraneous catalytic core and F(0) containing the membrane proton channel, linked together by a central stalk and a peripheral stalk. During catalysis, ATP synthesis in the catalytic domain of F(1) is coupled via a rotary mechanism of the central stalk subunits to proton translocation. In terms of biological role, this protein is part of the stalk that links CF(0) to CF(1). It either transmits conformational changes from CF(0) to CF(1) or is implicated in proton conduction. In Leptospira borgpetersenii serovar Hardjo-bovis (strain JB197), this protein is ATP synthase subunit delta.